The following is a 635-amino-acid chain: 1-deoxy-D-xylulose-5-phosphate synthase (635 aa).

Thiamine diphosphate contacts are provided by residues His76 and 117–119; that span reads GHS. Asp148 contributes to the Mg(2+) binding site. Residues 149 to 150, Asn177, Tyr294, and Glu379 contribute to the thiamine diphosphate site; that span reads GA. Asn177 provides a ligand contact to Mg(2+).

This sequence belongs to the transketolase family. DXPS subfamily. Homodimer. Mg(2+) is required as a cofactor. Thiamine diphosphate serves as cofactor.

It carries out the reaction D-glyceraldehyde 3-phosphate + pyruvate + H(+) = 1-deoxy-D-xylulose 5-phosphate + CO2. It participates in metabolic intermediate biosynthesis; 1-deoxy-D-xylulose 5-phosphate biosynthesis; 1-deoxy-D-xylulose 5-phosphate from D-glyceraldehyde 3-phosphate and pyruvate: step 1/1. Its function is as follows. Catalyzes the acyloin condensation reaction between C atoms 2 and 3 of pyruvate and glyceraldehyde 3-phosphate to yield 1-deoxy-D-xylulose-5-phosphate (DXP). This is 1-deoxy-D-xylulose-5-phosphate synthase from Neisseria meningitidis serogroup C (strain 053442).